The following is a 184-amino-acid chain: Translation initiation factor IF-3 (184 aa).

Belongs to the IF-3 family. As to quaternary structure, monomer.

The protein resides in the cytoplasm. IF-3 binds to the 30S ribosomal subunit and shifts the equilibrium between 70S ribosomes and their 50S and 30S subunits in favor of the free subunits, thus enhancing the availability of 30S subunits on which protein synthesis initiation begins. This is Translation initiation factor IF-3 from Mycoplasma genitalium (strain ATCC 33530 / DSM 19775 / NCTC 10195 / G37) (Mycoplasmoides genitalium).